The following is a 194-amino-acid chain: Leucyl/phenylalanyl-tRNA--protein transferase (194 aa).

The protein belongs to the L/F-transferase family.

Its subcellular location is the cytoplasm. The catalysed reaction is N-terminal L-lysyl-[protein] + L-leucyl-tRNA(Leu) = N-terminal L-leucyl-L-lysyl-[protein] + tRNA(Leu) + H(+). It carries out the reaction N-terminal L-arginyl-[protein] + L-leucyl-tRNA(Leu) = N-terminal L-leucyl-L-arginyl-[protein] + tRNA(Leu) + H(+). It catalyses the reaction L-phenylalanyl-tRNA(Phe) + an N-terminal L-alpha-aminoacyl-[protein] = an N-terminal L-phenylalanyl-L-alpha-aminoacyl-[protein] + tRNA(Phe). Functionally, functions in the N-end rule pathway of protein degradation where it conjugates Leu, Phe and, less efficiently, Met from aminoacyl-tRNAs to the N-termini of proteins containing an N-terminal arginine or lysine. The sequence is that of Leucyl/phenylalanyl-tRNA--protein transferase from Pelodictyon phaeoclathratiforme (strain DSM 5477 / BU-1).